Consider the following 400-residue polypeptide: Phosphoglycerate kinase (400 aa).

Substrate is bound by residues 21 to 23 (DLN), R36, 59 to 62 (HLGR), R114, and R147. ATP contacts are provided by residues K202, E329, and 355–358 (GGDT).

Belongs to the phosphoglycerate kinase family. Monomer.

Its subcellular location is the cytoplasm. The enzyme catalyses (2R)-3-phosphoglycerate + ATP = (2R)-3-phospho-glyceroyl phosphate + ADP. The protein operates within carbohydrate degradation; glycolysis; pyruvate from D-glyceraldehyde 3-phosphate: step 2/5. This is Phosphoglycerate kinase from Psychrobacter cryohalolentis (strain ATCC BAA-1226 / DSM 17306 / VKM B-2378 / K5).